The sequence spans 156 residues: MWKRPDPQAKIKAGDRPQTCQSLALGSATESALPQALKLSDFQNFSVFEDISQHIKEVGAQLVKKVNAIFQLDITKDGKTILQWTIDLKNGAGDMYLGSARLPADTVFIIPDSVFTELVVGKINPQKAFLAGKFKVRGKVLLSQKLERIFREWAKI.

Residues 44–156 (NFSVFEDISQ…ERIFREWAKI (113 aa)) form the SCP2 domain.

The polypeptide is SCP2 sterol-binding domain-containing protein 1 (Scp2d1) (Mus musculus (Mouse)).